We begin with the raw amino-acid sequence, 459 residues long: Phosphoenolpyruvate carboxylase (459 aa).

Belongs to the PEPCase type 2 family. Homotetramer. Requires Mg(2+) as cofactor.

It catalyses the reaction oxaloacetate + phosphate = phosphoenolpyruvate + hydrogencarbonate. In terms of biological role, catalyzes the irreversible beta-carboxylation of phosphoenolpyruvate (PEP) to form oxaloacetate (OAA), a four-carbon dicarboxylic acid source for the tricarboxylic acid cycle. This chain is Phosphoenolpyruvate carboxylase, found in Pyrobaculum calidifontis (strain DSM 21063 / JCM 11548 / VA1).